Reading from the N-terminus, the 212-residue chain is Cyclin-dependent kinase inhibitor 3 (212 aa).

Positions 1–24 (MKPPISIQASEFDSSDEEPADDEQ) are disordered. Residues 1–34 (MKPPISIQASEFDSSDEEPADDEQTPIQISWLPL) form an interaction with CDK2 region. A compositionally biased stretch (acidic residues) spans 13–24 (DSSDEEPADDEQ). Residues 32-201 (LPLSRVNCSQ…FRDKLAAYLS (170 aa)) enclose the Tyrosine-protein phosphatase domain. Cysteine 140 acts as the Phosphocysteine intermediate in catalysis.

Belongs to the protein-tyrosine phosphatase family. Interacts with cyclin-dependent kinases such as CDK1, CDK2 and CDK3. Does not interact with CDK4. Interacts (via C-terminus) with phosphorylated CDK2 (via C-terminal helix). Interacts with MS4A3 (via C-terminus); the interaction enhances CDKN3 enzymatic activity.

Its subcellular location is the cytoplasm. It localises to the perinuclear region. The catalysed reaction is O-phospho-L-tyrosyl-[protein] + H2O = L-tyrosyl-[protein] + phosphate. It catalyses the reaction O-phospho-L-seryl-[protein] + H2O = L-seryl-[protein] + phosphate. The enzyme catalyses O-phospho-L-threonyl-[protein] + H2O = L-threonyl-[protein] + phosphate. Its function is as follows. May play a role in cell cycle regulation. Dual specificity phosphatase active toward substrates containing either phosphotyrosine or phosphoserine residues. Dephosphorylates CDK2 at 'Thr-160' in a cyclin-dependent manner. This chain is Cyclin-dependent kinase inhibitor 3, found in Rattus norvegicus (Rat).